The following is a 402-amino-acid chain: Cholinephosphotransferase 1 (402 aa).

Residues 1–62 (MGLAEGLAAR…LVEKVPLWLA (62 aa)) are Cytoplasmic-facing. Residues 63-83 (PNTITMVGLLLNVLSTLILVC) form a helical membrane-spanning segment. Asn-64 serves as a coordination point for CDP-choline. Residues 84-93 (YCPTATEGAP) are Lumenal-facing. Residues 94–118 (FWTYLLCAIGLFVYQSLDAIDGKQA) traverse the membrane as a helical segment. Residues Asp-111 and Asp-114 each contribute to the Mg(2+) site. Arg-119 lines the CDP-choline pocket. Residues 119–125 (RRTNSSS) are Cytoplasmic-facing. Residues 126 to 150 (PLGEMFDHGCDSISIVFVNLGTIAA) traverse the membrane as a helical segment. Asp-132 contacts Mg(2+). Catalysis depends on His-133, which acts as the Proton acceptor. Residue Asp-136 participates in Mg(2+) binding. At 151 to 160 (VRLGTLPGWM) the chain is on the lumenal side. A helical transmembrane segment spans residues 161–179 (FYCCFVGMFMFYCAQWQTY). At 180-190 (VCGTLKFGIID) the chain is on the cytoplasmic side. Residues 191–207 (VTELQISVTVMFLMTAV) traverse the membrane as a helical segment. The Lumenal portion of the chain corresponds to 208–222 (CGPELWDYEIPFTGL). Residues 223-248 (PMKTIPLLGIIGGTVYSCSNYFRVIL) form a helical membrane-spanning segment. At 249 to 265 (SGGVGKNGSTVAGTSVL) the chain is on the cytoplasmic side. The chain crosses the membrane as a helical span at residues 266-281 (SPGLHIGLVLLLALMI). The Lumenal segment spans residues 282–293 (YKKSTTNLFLQN). A helical membrane pass occupies residues 294-316 (PCLYTLAFGFVSAKITIKLVIAH). Over 317–329 (MTKSEISLQDTAF) the chain is Cytoplasmic. A helical membrane pass occupies residues 330 to 339 (IGPGLLFFNQ). At 340-346 (YFNSFID) the chain is on the lumenal side. Residues 347–376 (EYIVLWIAMVISFADLLRYCISVCLQIATH) form a helical membrane-spanning segment. The Cytoplasmic segment spans residues 377–402 (LRISVFRISSNQAAEQVQTQKQKLTD).

The protein belongs to the CDP-alcohol phosphatidyltransferase class-I family. As to quaternary structure, homodimer. It depends on Mg(2+) as a cofactor. Mn(2+) serves as cofactor.

It is found in the golgi apparatus membrane. It catalyses the reaction CDP-choline + a 1,2-diacyl-sn-glycerol = a 1,2-diacyl-sn-glycero-3-phosphocholine + CMP + H(+). The catalysed reaction is 1,2-dioctanoyl-sn-glycerol + CDP-choline = 1,2-dioctanoyl-sn-glycero-3-phosphocholine + CMP + H(+). The enzyme catalyses 1-octadecanoyl-2-(5Z,8Z,11Z,14Z-eicosatetraenoyl)-sn-glycerol + CDP-choline = 1-octadecanoyl-2-(5Z,8Z,11Z,14Z-eicosatetraenoyl)-sn-glycero-3-phosphocholine + CMP + H(+). It carries out the reaction 1-hexadecanoyl-2-(9Z-octadecenoyl)-sn-glycerol + CDP-choline = 1-hexadecanoyl-2-(9Z-octadecenoyl)-sn-glycero-3-phosphocholine + CMP + H(+). It catalyses the reaction 1-hexadecanoyl-2-(4Z,7Z,10Z,13Z,16Z,19Z-docosahexaenoyl)-sn-glycerol + CDP-choline = 1-hexadecanoyl-2-(4Z,7Z,10Z,13Z,16Z,19Z-docosahexaenoyl)-sn-glycero-3-phosphocholine + CMP + H(+). It participates in phospholipid metabolism; phosphatidylcholine biosynthesis; phosphatidylcholine from phosphocholine: step 2/2. Functionally, catalyzes the final step of de novo phosphatidylcholine (PC) synthesis, i.e. the transfer of choline phosphate from CDP-choline to the free hydroxyl of a diacylglycerol (DAG), producing a PC. It thereby plays a central role in the formation and maintenance of vesicular membranes. Shows a high preference for CDP-choline over CDP-ethanolamine as substrate. The sequence is that of Cholinephosphotransferase 1 (chpt1) from Xenopus laevis (African clawed frog).